The sequence spans 319 residues: 12-(S)-hydroxy-5,8,10,14-eicosatetraenoic acid receptor (319 aa).

Residues 1-16 (MPFPNCSAPSTVVATA) lie on the Extracellular side of the membrane. The N-linked (GlcNAc...) asparagine glycan is linked to Asn-5. Residues 17 to 37 (VGVLLGLECGLGLLGNAVALW) form a helical membrane-spanning segment. Residues 38 to 52 (TFLFRVRVWKPYAVY) are Cytoplasmic-facing. A helical transmembrane segment spans residues 53 to 73 (LLNLALADLLLAACLPFLAAF). The Extracellular portion of the chain corresponds to 74 to 91 (YLSLQAWHLGRVGCWALH). The chain crosses the membrane as a helical span at residues 92–110 (FLLDLSRSVGMAFLAAVAL). Residues 111–131 (DRYLRVVHPRLKVNLLSPQAA) lie on the Cytoplasmic side of the membrane. The chain crosses the membrane as a helical span at residues 132 to 152 (LGVSGLVWLLMVALTCPGLLI). Residues 153–180 (SEAAQNSTRCHSFYSRADGSFSIIWQEA) lie on the Extracellular side of the membrane. The chain crosses the membrane as a helical span at residues 181 to 201 (LSCLQFVLPFGLIVFCNAGII). Over 202–219 (RALQKRLREPEKQPKLQR) the chain is Cytoplasmic. The chain crosses the membrane as a helical span at residues 220–240 (AQALVTLVVVLFALCFLPCFL). The Extracellular segment spans residues 241-265 (ARVLMHIFQNLGSCRALCAVAHTSD). The helical transmembrane segment at 266-284 (VTGSLTYLHSVLNPVVYCF) threads the bilayer. The Cytoplasmic segment spans residues 285–319 (SSPTFRSSYRRVFHTLRGKGQAAEPPDFNPRDSYS).

It belongs to the G-protein coupled receptor 1 family. As to quaternary structure, interacts with KRAS; in a farnesylation-dependent manner.

The protein localises to the cell membrane. High-affinity receptor for 12-(S)-hydroxy-5,8,10,14-eicosatetraenoic acid (12-S-HETE), with much lower affinities for other HETE isomers. 12-S-HETE is a eicosanoid, a 12-lipoxygenase (ALOX12) metabolite of arachidonic acid, involved in many physiologic and pathologic processes. 12-S-HETE-binding leads to activation of ERK1/2 (MAPK3/MAPK1), MEK, and NF-kappa-B pathways leading to cell growth. Plays a crucial role for proliferation, survival and macropinocytosis of KRAS-dependent cancer cells by mediating the translocation of KRAS from the endoplasmic reticulum to the plasma membrane (PM) and its association with the PM. Contributes to enhanced immune responses by inducing dendrite protrusion of small intestinal CX3CR1(+) phagocytes for the uptake of luminal antigens. Acts also as a key receptor for 12-(S)-HETE-mediated liver ischemia reperfusion injury. In terms of biological role, proton-sensing G protein-coupled receptor. The polypeptide is 12-(S)-hydroxy-5,8,10,14-eicosatetraenoic acid receptor (GPR31) (Homo sapiens (Human)).